We begin with the raw amino-acid sequence, 353 residues long: Carbamoyl phosphate synthase arginine-specific small chain (353 aa).

The tract at residues 1–162 (MEGYLVLEDG…EISTFGDGNK (162 aa)) is CPSase. L-glutamine contacts are provided by Ser-44, Gly-210, and Gly-212. Residues 163–349 (HIALIDFGYK…LKNVIPARRE (187 aa)) form the Glutamine amidotransferase type-1 domain. Cys-237 acts as the Nucleophile in catalysis. L-glutamine is bound by residues Leu-238, Gln-241, Asn-279, and Tyr-282. Active-site residues include His-322 and Glu-324.

This sequence belongs to the CarA family. Composed of two chains; the small (or glutamine) chain promotes the hydrolysis of glutamine to ammonia, which is used by the large (or ammonia) chain to synthesize carbamoyl phosphate. Tetramer of heterodimers (alpha,beta)4.

It carries out the reaction hydrogencarbonate + L-glutamine + 2 ATP + H2O = carbamoyl phosphate + L-glutamate + 2 ADP + phosphate + 2 H(+). It catalyses the reaction L-glutamine + H2O = L-glutamate + NH4(+). It participates in amino-acid biosynthesis; L-arginine biosynthesis; carbamoyl phosphate from bicarbonate: step 1/1. Its function is as follows. Small subunit of the glutamine-dependent carbamoyl phosphate synthetase (CPSase). CPSase catalyzes the formation of carbamoyl phosphate from the ammonia moiety of glutamine, carbonate, and phosphate donated by ATP, constituting the first step of the biosynthetic pathway leading to arginine and/or urea. The small subunit (glutamine amidotransferase) binds and cleaves glutamine to supply the large subunit with the substrate ammonia. This is Carbamoyl phosphate synthase arginine-specific small chain from Bacillus subtilis (strain 168).